We begin with the raw amino-acid sequence, 255 residues long: 5'-nucleotidase SurE (255 aa).

A divalent metal cation contacts are provided by Asp16, Asp17, Ser47, and Asn100.

The protein belongs to the SurE nucleotidase family. The cofactor is a divalent metal cation.

The protein resides in the cytoplasm. It catalyses the reaction a ribonucleoside 5'-phosphate + H2O = a ribonucleoside + phosphate. In terms of biological role, nucleotidase that shows phosphatase activity on nucleoside 5'-monophosphates. The polypeptide is 5'-nucleotidase SurE (Vibrio vulnificus (strain CMCP6)).